A 568-amino-acid chain; its full sequence is Nucleoprotein (568 aa).

The tract at residues 54–240 (MRKEKRDDSD…IDGNKSAINI (187 aa)) is binding site for the cap structure m7GTP. Residues Asp-388 and Glu-390 each contribute to the Mn(2+) site. Glu-398, Cys-505, His-508, and Cys-528 together coordinate Zn(2+). A Mn(2+)-binding site is contributed by Asp-532.

It belongs to the arenaviridae nucleocapsid protein family. In terms of assembly, homomultimerizes to form the nucleocapsid. Binds to viral genomic RNA. Interacts with glycoprotein G2. Interacts with protein Z; this interaction probably directs the encapsidated genome to budding sites. Interacts with protein L; this interaction does not interfere with Z-L interaction. Interacts with host IKBKE (via Protein kinase domain); the interaction inhibits IKBKE kinase activity.

It is found in the virion. The protein resides in the host cytoplasm. Its function is as follows. Encapsidates the genome, protecting it from nucleases. The encapsidated genomic RNA is termed the nucleocapsid (NC). Serves as template for viral transcription and replication. The increased presence of protein N in host cell does not seem to trigger the switch from transcription to replication as observed in other negative strain RNA viruses. Through the interaction with host IKBKE, strongly inhibits the phosphorylation and nuclear translocation of host IRF3, a protein involved in interferon activation pathway, leading to the inhibition of interferon-beta and IRF3-dependent promoters activation. Also encodes a functional 3'-5' exoribonuclease that degrades preferentially dsRNA substrates and thereby participates in the suppression of interferon induction. The polypeptide is Nucleoprotein (Praomys (African soft-furred rats)).